The primary structure comprises 390 residues: F-box/kelch-repeat protein At3g04660 (390 aa).

The 50-residue stretch at 18–67 folds into the F-box domain; sequence YDPSSILPLELKIEILMKSPPKSIAKLGFVSNHWSSIIRGQVFTDLYMRR. Kelch repeat units lie at residues 115–161 and 272–323; these read FSPP…FGYD and MVDH…DQRV.

In terms of assembly, part of a SCF (ASK-cullin-F-box) protein ligase complex. Interacts with SKP1A/ASK1, SKP1B/ASK2, ASK11 and ASK13.

Its subcellular location is the nucleus. Its pathway is protein modification; protein ubiquitination. Its function is as follows. Component of SCF(ASK-cullin-F-box) E3 ubiquitin ligase complexes, which may mediate the ubiquitination and subsequent proteasomal degradation of target proteins. This chain is F-box/kelch-repeat protein At3g04660, found in Arabidopsis thaliana (Mouse-ear cress).